We begin with the raw amino-acid sequence, 232 residues long: Large ribosomal subunit protein uL1 (232 aa).

The protein belongs to the universal ribosomal protein uL1 family. In terms of assembly, part of the 50S ribosomal subunit.

Binds directly to 23S rRNA. The L1 stalk is quite mobile in the ribosome, and is involved in E site tRNA release. Its function is as follows. Protein L1 is also a translational repressor protein, it controls the translation of the L11 operon by binding to its mRNA. This is Large ribosomal subunit protein uL1 from Rhizorhabdus wittichii (strain DSM 6014 / CCUG 31198 / JCM 15750 / NBRC 105917 / EY 4224 / RW1) (Sphingomonas wittichii).